A 265-amino-acid polypeptide reads, in one-letter code: 4-hydroxy-tetrahydrodipicolinate reductase (265 aa).

NAD(+)-binding positions include 7-12 (GASGRM) and D33. R34 lines the NADP(+) pocket. Residues 96–98 (GTT) and 120–123 (AANM) contribute to the NAD(+) site. H153 functions as the Proton donor/acceptor in the catalytic mechanism. Residue H154 coordinates (S)-2,3,4,5-tetrahydrodipicolinate. K157 (proton donor) is an active-site residue. 163–164 (GT) contributes to the (S)-2,3,4,5-tetrahydrodipicolinate binding site.

It belongs to the DapB family.

Its subcellular location is the cytoplasm. It carries out the reaction (S)-2,3,4,5-tetrahydrodipicolinate + NAD(+) + H2O = (2S,4S)-4-hydroxy-2,3,4,5-tetrahydrodipicolinate + NADH + H(+). It catalyses the reaction (S)-2,3,4,5-tetrahydrodipicolinate + NADP(+) + H2O = (2S,4S)-4-hydroxy-2,3,4,5-tetrahydrodipicolinate + NADPH + H(+). It participates in amino-acid biosynthesis; L-lysine biosynthesis via DAP pathway; (S)-tetrahydrodipicolinate from L-aspartate: step 4/4. In terms of biological role, catalyzes the conversion of 4-hydroxy-tetrahydrodipicolinate (HTPA) to tetrahydrodipicolinate. This is 4-hydroxy-tetrahydrodipicolinate reductase from Burkholderia vietnamiensis (strain G4 / LMG 22486) (Burkholderia cepacia (strain R1808)).